The following is a 245-amino-acid chain: uncharacterized protein (245 aa).

The HTH gntR-type domain maps to arginine 29–methionine 96. Positions isoleucine 56–serine 75 form a DNA-binding region, H-T-H motif.

This is an uncharacterized protein from Paraburkholderia xenovorans (strain LB400).